Consider the following 442-residue polypeptide: Tubulin beta chain (442 aa).

Gln-11, Glu-69, Ser-138, Gly-142, Thr-143, Gly-144, Asn-204, and Asn-226 together coordinate GTP. Residue Glu-69 coordinates Mg(2+).

It belongs to the tubulin family. In terms of assembly, dimer of alpha and beta chains. A typical microtubule is a hollow water-filled tube with an outer diameter of 25 nm and an inner diameter of 15 nM. Alpha-beta heterodimers associate head-to-tail to form protofilaments running lengthwise along the microtubule wall with the beta-tubulin subunit facing the microtubule plus end conferring a structural polarity. Microtubules usually have 13 protofilaments but different protofilament numbers can be found in some organisms and specialized cells. It depends on Mg(2+) as a cofactor.

It is found in the cytoplasm. It localises to the cytoskeleton. Functionally, tubulin is the major constituent of microtubules, a cylinder consisting of laterally associated linear protofilaments composed of alpha- and beta-tubulin heterodimers. Microtubules grow by the addition of GTP-tubulin dimers to the microtubule end, where a stabilizing cap forms. Below the cap, tubulin dimers are in GDP-bound state, owing to GTPase activity of alpha-tubulin. This chain is Tubulin beta chain, found in Trypanosoma cruzi.